An 887-amino-acid chain; its full sequence is Bifunctional uridylyltransferase/uridylyl-removing enzyme (887 aa).

Residues 1–329 (MKGLNAKPFS…FPDEEAVTTI (329 aa)) are uridylyltransferase. The tract at residues 330-686 (INERFQKRGD…TRAAETGAGV (357 aa)) is uridylyl-removing. Positions 448 to 570 (VDEHILMVVR…MRDERHLIAL (123 aa)) constitute an HD domain. 2 ACT domains span residues 687-772 (EVLV…GRLS) and 796-871 (VLSI…PETP). A disordered region spans residues 864–887 (TSPQPETPGKAPGKPSAGDRIIPR).

This sequence belongs to the GlnD family. The cofactor is Mg(2+).

The catalysed reaction is [protein-PII]-L-tyrosine + UTP = [protein-PII]-uridylyl-L-tyrosine + diphosphate. It carries out the reaction [protein-PII]-uridylyl-L-tyrosine + H2O = [protein-PII]-L-tyrosine + UMP + H(+). With respect to regulation, uridylyltransferase (UTase) activity is inhibited by glutamine, while glutamine activates uridylyl-removing (UR) activity. In terms of biological role, modifies, by uridylylation and deuridylylation, the PII regulatory proteins (GlnB and homologs), in response to the nitrogen status of the cell that GlnD senses through the glutamine level. Under low glutamine levels, catalyzes the conversion of the PII proteins and UTP to PII-UMP and PPi, while under higher glutamine levels, GlnD hydrolyzes PII-UMP to PII and UMP (deuridylylation). Thus, controls uridylylation state and activity of the PII proteins, and plays an important role in the regulation of nitrogen assimilation and metabolism. The protein is Bifunctional uridylyltransferase/uridylyl-removing enzyme of Nitrosospira multiformis (strain ATCC 25196 / NCIMB 11849 / C 71).